The following is a 798-amino-acid chain: Translation initiation factor IF-2 (798 aa).

The segment at 40 to 207 (SEQETKLRQA…QQESAKPAVP (168 aa)) is disordered. Positions 57 to 186 (NTQSKATNNQ…RNNFNNQNRN (130 aa)) are enriched in low complexity. Over residues 187–196 (RFNKKGKKGK) the composition is skewed to basic residues. Positions 300–469 (TRPPVVTIMG…LLIAEVEDLK (170 aa)) constitute a tr-type G domain. The segment at 309 to 316 (GHVDHGKT) is G1. 309–316 (GHVDHGKT) is a binding site for GTP. Residues 334–338 (GITQH) are G2. A G3 region spans residues 355 to 358 (DTPG). GTP contacts are provided by residues 355–359 (DTPGH) and 409–412 (NKID). The segment at 409 to 412 (NKID) is G4. The tract at residues 445-447 (SAK) is G5.

The protein belongs to the TRAFAC class translation factor GTPase superfamily. Classic translation factor GTPase family. IF-2 subfamily.

It localises to the cytoplasm. Functionally, one of the essential components for the initiation of protein synthesis. Protects formylmethionyl-tRNA from spontaneous hydrolysis and promotes its binding to the 30S ribosomal subunits. Also involved in the hydrolysis of GTP during the formation of the 70S ribosomal complex. The protein is Translation initiation factor IF-2 of Enterococcus faecalis (strain ATCC 700802 / V583).